The chain runs to 743 residues: MADSTGLQFTVKVGALPESTFVVAEFALDEALNRPFNLRLELASAQPDIDFGAVLDQPCELLVWYNGELQRRVCGVVSDFAQGDSGFRRTRYQLMVQPALWRLSLRQNCRIFQAQKPDEILSILLQEHGITDYAFALKNEHAKREYCVQYRETDLDFVNRLAAEEGMFYFHEFEAGKHRIVFADDAAALTAGPELFFNLGNRSLEQGPYVRQFHYREAVRPSDVELKDYSCKTPAYGLSHKKQGSELEHQRDTYQHFDYPGRYKQDPSGKAFAQHRLDALRNDAVAGQVKSNCAALLPGQTFSLTEHPNGSLNTDWQIVRIRHTGEQPQALEEEGGSGPTVYHNEFGVVKASTTWRARIGSPEAPHKPMVDGPQIAMVVGPDGEEIYCDEHGRVKLQFPWDRYGSSNDQSSCWVRVSQGWAGGQYGMMAIPRIGHEVIVSFLEGDPDQPIVTGRTYHATNRPPYELPANKTRTVLRTETHQGEGFNELRFEDQAGQEEIYIHGQKDLNVLIENDAAWHIKHDQHTDIDNERVTRVRKVPGEEGAPPSLGNDHLTVEGEKRDHIKADYSLTVDTSMHQKLGQSWLTQAGQEVHVKAGAKVVLEAGSEITVKVGGCFIKVDGGGVTLVGPTIKMNSGGNAGSGSGWAGKVPKSMEGMLDSPHTRWMKFYHLDSELMPLAGTPYKAVLSDGSVREGTLDGEGMALLEDVPAGTASVTYDLQDTFADLPRESISALTGHLDSLSDEG.

This sequence belongs to the VgrG protein family.

The protein localises to the secreted. It catalyses the reaction L-arginyl-[protein] + NAD(+) = N(omega)-(ADP-D-ribosyl)-L-arginyl-[protein] + nicotinamide + H(+). Functionally, part of the type VI secretion system specialized secretion system, which delivers several virulence factors in both prokaryotic and eukaryotic cells during infection. Acts directly as an secreted effector with an actin ADP-ribosyltransferase activity that disrupts the host actin cytoskeleton, leading to a decrease in host cell viability and an increase in apoptosis. This Aeromonas hydrophila subsp. hydrophila (strain ATCC 7966 / DSM 30187 / BCRC 13018 / CCUG 14551 / JCM 1027 / KCTC 2358 / NCIMB 9240 / NCTC 8049) protein is Type VI secretion system spike protein VgrG1 (vgrG1).